A 160-amino-acid chain; its full sequence is uncharacterized protein (160 aa).

This is an uncharacterized protein from Mycobacterium tuberculosis (strain ATCC 25618 / H37Rv).